The chain runs to 351 residues: Phosphate acyltransferase (351 aa).

It belongs to the PlsX family. Homodimer. Probably interacts with PlsY.

The protein resides in the cytoplasm. The enzyme catalyses a fatty acyl-[ACP] + phosphate = an acyl phosphate + holo-[ACP]. Its pathway is lipid metabolism; phospholipid metabolism. In terms of biological role, catalyzes the reversible formation of acyl-phosphate (acyl-PO(4)) from acyl-[acyl-carrier-protein] (acyl-ACP). This enzyme utilizes acyl-ACP as fatty acyl donor, but not acyl-CoA. The chain is Phosphate acyltransferase from Neisseria meningitidis serogroup B (strain ATCC BAA-335 / MC58).